We begin with the raw amino-acid sequence, 252 residues long: Small ribosomal subunit protein uS3 (252 aa).

The 73-residue stretch at 39-111 folds into the KH type-2 domain; that stretch reads IRKLINNFTK…DVNLNVLEVK (73 aa). The segment at 222–252 is disordered; the sequence is KPFASQSSNTPNRRPRNFKGGNNNHVNAKKN. Polar residues predominate over residues 241-252; it reads GGNNNHVNAKKN.

Belongs to the universal ribosomal protein uS3 family. As to quaternary structure, part of the 30S ribosomal subunit. Forms a tight complex with proteins S10 and S14.

Functionally, binds the lower part of the 30S subunit head. Binds mRNA in the 70S ribosome, positioning it for translation. This chain is Small ribosomal subunit protein uS3, found in Onion yellows phytoplasma (strain OY-M).